The primary structure comprises 667 residues: Gamma-tubulin complex component 4 (667 aa).

The interval 424–446 is disordered; that stretch reads DHKADATQPREVPSRETSPREAP.

It belongs to the TUBGCP family. Component of the gamma-tubulin ring complex (gTuRC) consisting of TUBGCP2, TUBGCP3, TUBGCP4, TUBGCP5 and TUBGCP6 and gamma-tubulin TUBG1 or TUBG2. TUBGCP2, TUBGCP3, TUBGCP4, TUBGCP5 and TUBGCP6 assemble in a 5:5:2:1:1 stoichiometry; each is associated with a gamma-tubulin, thereby arranging 14 gamma-tubulins in a helical manner. Gamma-tubulin at the first position is blocked by TUBGCP3 at the last position, allowing 13 protafilaments to grow into a microtubule. The gTuRC (via TUBGCP3 and TUBGCP6) interacts with ACTB and MZT1; the interactions form a luminal bridge that stabilizes the initial structure during complex assembly. The gTuRC (via TUBGCP2) interacts with MZT2A/MZT2B and CDK5RAP2 (via CM1 motif); the interactions play a role in gTuRC activation. Interacts with NINL. Interacts with ATF5; the ATF5:PCNT:polyglutamylated tubulin (PGT) tripartite unites the mother centriole and the pericentriolar material (PCM) in the centrosome.

It is found in the cytoplasm. It localises to the cytoskeleton. Its subcellular location is the microtubule organizing center. The protein resides in the centrosome. Component of the gamma-tubulin ring complex (gTuRC) which mediates microtubule nucleation. The gTuRC regulates the minus-end nucleation of alpha-beta tubulin heterodimers that grow into microtubule protafilaments, a critical step in centrosome duplication and spindle formation. This chain is Gamma-tubulin complex component 4 (Tubgcp4), found in Mus musculus (Mouse).